Reading from the N-terminus, the 447-residue chain is MSEEDKSKKLEELLKLLKVHDGDLSKFTSQQRKDMNEYKFWKTQPVTKFDEVIKKEGPIDSSKRPEDIPDTPLPLLGDFEWCTVDVNDEKQLEDVYVLLNENYVEDKDSTFRFNYSRDFLNWGLKPPGWKEEWQVGVRVKETKRLVGFISAIPTNLQVRGNDVRSVEINFLCVHKKLRSKRLAPILIKEVTRRVNKYDIWQALHTGGVVLPSPVSSCRYAHRPLNWSKLYDVEFTALPANATKTQMIAKYTLPKTPISNIKLMEERHVDEAFELFNKYQQRFELRPNFDKEEFRHWILTREDVVYSYIIENDEGKVTDFVSFYSLPFTIINNPLYKDLGIGYMFYYASDADFGYDRFSAEGTERLRKRLNLLINDACILARNLKMDVFNALTSQDNALFLEDLKFGPGDGFLNFYLFNYRCFPITGGIKEDQTFDVEKRSNVGVVLL.

Residues 38-41 (YKFW), 171-173 (LCV), and 179-183 (SKRLA) contribute to the tetradecanoyl-CoA site. Leu447 acts as the Proton acceptor; via carboxylate in catalysis.

Belongs to the NMT family. In terms of assembly, monomer.

It is found in the cytoplasm. The catalysed reaction is N-terminal glycyl-[protein] + tetradecanoyl-CoA = N-tetradecanoylglycyl-[protein] + CoA + H(+). In terms of biological role, adds a myristoyl group to the N-terminal glycine residue of certain cellular proteins. The polypeptide is Glycylpeptide N-tetradecanoyltransferase (NMT1) (Kluyveromyces lactis (strain ATCC 8585 / CBS 2359 / DSM 70799 / NBRC 1267 / NRRL Y-1140 / WM37) (Yeast)).